Here is a 332-residue protein sequence, read N- to C-terminus: 4-hydroxy-3-methylbut-2-enyl diphosphate reductase (332 aa).

Cys-34 contacts [4Fe-4S] cluster. (2E)-4-hydroxy-3-methylbut-2-enyl diphosphate contacts are provided by His-63 and His-96. 2 residues coordinate dimethylallyl diphosphate: His-63 and His-96. Residues His-63 and His-96 each contribute to the isopentenyl diphosphate site. Cys-118 provides a ligand contact to [4Fe-4S] cluster. A (2E)-4-hydroxy-3-methylbut-2-enyl diphosphate-binding site is contributed by His-146. His-146 serves as a coordination point for dimethylallyl diphosphate. Residue His-146 coordinates isopentenyl diphosphate. The active-site Proton donor is Glu-148. Position 186 (Thr-186) interacts with (2E)-4-hydroxy-3-methylbut-2-enyl diphosphate. Cys-216 is a [4Fe-4S] cluster binding site. (2E)-4-hydroxy-3-methylbut-2-enyl diphosphate-binding residues include Ser-244, Ser-245, Asn-246, and Ser-289. Dimethylallyl diphosphate-binding residues include Ser-244, Ser-245, Asn-246, and Ser-289. Residues Ser-244, Ser-245, Asn-246, and Ser-289 each coordinate isopentenyl diphosphate.

This sequence belongs to the IspH family. It depends on [4Fe-4S] cluster as a cofactor.

It carries out the reaction isopentenyl diphosphate + 2 oxidized [2Fe-2S]-[ferredoxin] + H2O = (2E)-4-hydroxy-3-methylbut-2-enyl diphosphate + 2 reduced [2Fe-2S]-[ferredoxin] + 2 H(+). The catalysed reaction is dimethylallyl diphosphate + 2 oxidized [2Fe-2S]-[ferredoxin] + H2O = (2E)-4-hydroxy-3-methylbut-2-enyl diphosphate + 2 reduced [2Fe-2S]-[ferredoxin] + 2 H(+). Its pathway is isoprenoid biosynthesis; dimethylallyl diphosphate biosynthesis; dimethylallyl diphosphate from (2E)-4-hydroxy-3-methylbutenyl diphosphate: step 1/1. It participates in isoprenoid biosynthesis; isopentenyl diphosphate biosynthesis via DXP pathway; isopentenyl diphosphate from 1-deoxy-D-xylulose 5-phosphate: step 6/6. Catalyzes the conversion of 1-hydroxy-2-methyl-2-(E)-butenyl 4-diphosphate (HMBPP) into a mixture of isopentenyl diphosphate (IPP) and dimethylallyl diphosphate (DMAPP). Acts in the terminal step of the DOXP/MEP pathway for isoprenoid precursor biosynthesis. This chain is 4-hydroxy-3-methylbut-2-enyl diphosphate reductase, found in Mycobacterium ulcerans (strain Agy99).